Reading from the N-terminus, the 361-residue chain is uncharacterized protein (361 aa).

Residue 41–48 (GPLNSGKT) coordinates ATP.

Belongs to the archaeal ATPase family.

This is an uncharacterized protein from Methanocaldococcus jannaschii (strain ATCC 43067 / DSM 2661 / JAL-1 / JCM 10045 / NBRC 100440) (Methanococcus jannaschii).